The sequence spans 123 residues: Glycine cleavage system H protein (123 aa).

One can recognise a Lipoyl-binding domain in the interval 23-104 (HWLAGITDHA…PYDAWIFSFE (82 aa)). Residue K64 is modified to N6-lipoyllysine.

The protein belongs to the GcvH family. The glycine cleavage system is composed of four proteins: P, T, L and H. The cofactor is (R)-lipoate.

Functionally, the glycine cleavage system catalyzes the degradation of glycine. The H protein shuttles the methylamine group of glycine from the P protein to the T protein. In Methylobacillus flagellatus (strain ATCC 51484 / DSM 6875 / VKM B-1610 / KT), this protein is Glycine cleavage system H protein.